Reading from the N-terminus, the 72-residue chain is Sperm protein associated with the nucleus on the X chromosome N1 (72 aa).

The disordered stretch occupies residues 1–40 (MEKPTSSTNGEKRKSPCDSNNKNDEMQETPNRDLVLEPSL). Residues 10–35 (GEKRKSPCDSNNKNDEMQETPNRDLV) show a composition bias toward basic and acidic residues.

This sequence belongs to the SPAN-X family.

This Gorilla gorilla gorilla (Western lowland gorilla) protein is Sperm protein associated with the nucleus on the X chromosome N1 (SPANXN1).